The chain runs to 308 residues: tRNA dimethylallyltransferase (308 aa).

Residue 14 to 21 (GPTASGKT) participates in ATP binding. 16-21 (TASGKT) is a substrate binding site. Interaction with substrate tRNA stretches follow at residues 39–42 (DSAL), 163–167 (QRLSR), and 244–249 (RCVGYR).

It belongs to the IPP transferase family. As to quaternary structure, monomer. Requires Mg(2+) as cofactor.

It catalyses the reaction adenosine(37) in tRNA + dimethylallyl diphosphate = N(6)-dimethylallyladenosine(37) in tRNA + diphosphate. Its function is as follows. Catalyzes the transfer of a dimethylallyl group onto the adenine at position 37 in tRNAs that read codons beginning with uridine, leading to the formation of N6-(dimethylallyl)adenosine (i(6)A). In Shewanella oneidensis (strain ATCC 700550 / JCM 31522 / CIP 106686 / LMG 19005 / NCIMB 14063 / MR-1), this protein is tRNA dimethylallyltransferase.